We begin with the raw amino-acid sequence, 105 residues long: Small ribosomal subunit protein uS17 (105 aa).

It belongs to the universal ribosomal protein uS17 family. Part of the 30S ribosomal subunit. Contacts protein S12.

In terms of biological role, one of the primary rRNA binding proteins, it binds directly to 16S rRNA where it helps nucleate assembly of the platform and body of the 30S subunit by bringing together and stabilizing interactions between several different RNA helices. The combined cluster of proteins S8, S12 and S17 appears to hold together the shoulder and platform of the 30S subunit. The protein is Small ribosomal subunit protein uS17 of Thermus thermophilus (strain ATCC 27634 / DSM 579 / HB8).